The primary structure comprises 373 residues: MLYWLFDSWLSQFYSPFSAVSSVTLRTLLTVITSLAFSIILGPRTIAYLRSVKYDQAVRDDGPKTHLAKTGTPTMGGVLILTSIGFSTLCWANLANPYVWILMVVMVIFGAVGWADDWLKIKYKNPKGLIARKKYFWLSVGALFVGSSLYYIASQQPDPAQTKAMVDLLIPLFKNWIVPLSALPLGLGFIIFTYFVINGSSNAVNLTDGLDGLAILPVVFVAAGLGVFSYVSGDVRFADYLHVPYIAYNSEVTIVCAAMIGSGLGFLWYNAHPAQVFMGDVGALALGAMLGTIAVMTRQEIAFAIMGGLFVAEALSVILQVGSFKLRKKRVLLMAPLHHHFEELGWKETQVVVRFWIIAILLVVLGLMTLKLR.

10 helical membrane passes run 28–48 (LLTVITSLAFSIILGPRTIAY), 72–92 (TPTMGGVLILTSIGFSTLCWA), 94–114 (LANPYVWILMVVMVIFGAVGW), 135–155 (YFWLSVGALFVGSSLYYIASQ), 177–197 (IVPLSALPLGLGFIIFTYFVI), 212–232 (GLAILPVVFVAAGLGVFSYVS), 252–272 (VTIVCAAMIGSGLGFLWYNAH), 276–296 (VFMGDVGALALGAMLGTIAVM), 301–321 (IAFAIMGGLFVAEALSVILQV), and 350–370 (QVVVRFWIIAILLVVLGLMTL).

Belongs to the glycosyltransferase 4 family. MraY subfamily. Mg(2+) is required as a cofactor.

Its subcellular location is the cell inner membrane. It carries out the reaction UDP-N-acetyl-alpha-D-muramoyl-L-alanyl-gamma-D-glutamyl-meso-2,6-diaminopimeloyl-D-alanyl-D-alanine + di-trans,octa-cis-undecaprenyl phosphate = di-trans,octa-cis-undecaprenyl diphospho-N-acetyl-alpha-D-muramoyl-L-alanyl-D-glutamyl-meso-2,6-diaminopimeloyl-D-alanyl-D-alanine + UMP. It functions in the pathway cell wall biogenesis; peptidoglycan biosynthesis. Catalyzes the initial step of the lipid cycle reactions in the biosynthesis of the cell wall peptidoglycan: transfers peptidoglycan precursor phospho-MurNAc-pentapeptide from UDP-MurNAc-pentapeptide onto the lipid carrier undecaprenyl phosphate, yielding undecaprenyl-pyrophosphoryl-MurNAc-pentapeptide, known as lipid I. In Psychrobacter sp. (strain PRwf-1), this protein is Phospho-N-acetylmuramoyl-pentapeptide-transferase.